Reading from the N-terminus, the 294-residue chain is Bifunctional protein FolD (294 aa).

NADP(+)-binding positions include 166-168 (GRS), serine 191, and isoleucine 232.

Belongs to the tetrahydrofolate dehydrogenase/cyclohydrolase family. As to quaternary structure, homodimer.

It catalyses the reaction (6R)-5,10-methylene-5,6,7,8-tetrahydrofolate + NADP(+) = (6R)-5,10-methenyltetrahydrofolate + NADPH. It carries out the reaction (6R)-5,10-methenyltetrahydrofolate + H2O = (6R)-10-formyltetrahydrofolate + H(+). Its pathway is one-carbon metabolism; tetrahydrofolate interconversion. Functionally, catalyzes the oxidation of 5,10-methylenetetrahydrofolate to 5,10-methenyltetrahydrofolate and then the hydrolysis of 5,10-methenyltetrahydrofolate to 10-formyltetrahydrofolate. The chain is Bifunctional protein FolD from Nitrobacter winogradskyi (strain ATCC 25391 / DSM 10237 / CIP 104748 / NCIMB 11846 / Nb-255).